The primary structure comprises 1133 residues: Protein TPR3 (1133 aa).

Residues 4–36 (LSRELVFLILQFLDEEKFKETVHKLEQESGFYF) enclose the LisH domain. A CTLH domain is found at 34–92 (FYFNMKYFEDEVINGNWDEVERYLGGFTKVDDNRYSMKIFFEIRKQKYLEALDKHDRSK). The segment at 287–307 (PTTANPSMDYPSGDSDHVSKR) is disordered. WD repeat units lie at residues 348–388 (SQGS…RLVL), 410–449 (DPTV…DIRQ), 455–496 (AHVG…KQFT), 499–540 (GHEA…SRVD), 543–586 (APGH…VKRT), 590–629 (FRKR…LLTT), 634–673 (GGLP…RLLR), 771–810 (MRTS…RNSS), 837–875 (NPEE…TMTT), 878–918 (PPPP…VKSK), 921–960 (GHSK…KLKS), and 1014–1053 (ENSS…LQCR). Residues 1099-1133 (ESERKWGNPPPAENGSTSALSTPPNGASSSDQPER) form a disordered region. The span at 1112-1133 (NGSTSALSTPPNGASSSDQPER) shows a compositional bias: polar residues.

In terms of assembly, tetramer. Interacts with D53. Interacts with MODD and HDAC1. Interacts with WOX1. Interacts with MOF1. As to expression, expressed in panicles, stems, leaves, spikelets and seed endosperm.

In terms of biological role, probable downstream regulator of strigolactones signaling. Functions in a complex with MODD and HDAC1 to down-regulate the histone acetylation level at BZIP46 target genes. BZIP46 is a positive regulator of abscisic acid (ABA) signaling and drought stress tolerance. The chain is Protein TPR3 from Oryza sativa subsp. japonica (Rice).